The chain runs to 213 residues: 3-demethoxyubiquinol 3-hydroxylase (213 aa).

Residues E62, E92, H95, E144, E176, and H179 each coordinate Fe cation.

This sequence belongs to the COQ7 family. The cofactor is Fe cation.

It localises to the cell membrane. The enzyme catalyses a 5-methoxy-2-methyl-3-(all-trans-polyprenyl)benzene-1,4-diol + AH2 + O2 = a 3-demethylubiquinol + A + H2O. Its pathway is cofactor biosynthesis; ubiquinone biosynthesis. Functionally, catalyzes the hydroxylation of 2-nonaprenyl-3-methyl-6-methoxy-1,4-benzoquinol during ubiquinone biosynthesis. The sequence is that of 3-demethoxyubiquinol 3-hydroxylase from Psychrobacter sp. (strain PRwf-1).